Reading from the N-terminus, the 311-residue chain is Serine/threonine-protein phosphatase 4 catalytic subunit A (311 aa).

Asp-58, His-60, Asp-86, and Asn-118 together coordinate Mn(2+). The active-site Proton donor is the His-119. Mn(2+) is bound by residues His-168 and His-242. Leu-311 is modified (leucine methyl ester).

This sequence belongs to the PPP phosphatase family. PP-4 (PP-X) subfamily. In terms of assembly, serine/threonine-protein phosphatase 4 (PP4) occurs in different assemblies of the catalytic and one or more regulatory subunits. Requires Mn(2+) as cofactor.

The protein localises to the cytoplasm. It is found in the cytoskeleton. It localises to the microtubule organizing center. Its subcellular location is the centrosome. The catalysed reaction is O-phospho-L-seryl-[protein] + H2O = L-seryl-[protein] + phosphate. The enzyme catalyses O-phospho-L-threonyl-[protein] + H2O = L-threonyl-[protein] + phosphate. Its function is as follows. Protein phosphatase that regulates many processes such as microtubule organization at centrosomes. The protein is Serine/threonine-protein phosphatase 4 catalytic subunit A (ppp4ca) of Danio rerio (Zebrafish).